A 327-amino-acid chain; its full sequence is Putative cyclin-dependent kinase F-2 (327 aa).

Residues 4–295 form the Protein kinase domain; that stretch reads YECLGKIGEG…AADALRCAWF (292 aa). Residues 10 to 18 and Lys-33 contribute to the ATP site; that span reads IGEGAAGVV. Asp-134 acts as the Proton acceptor in catalysis. Position 167 is a phosphothreonine (Thr-167).

Belongs to the protein kinase superfamily. CMGC Ser/Thr protein kinase family. CDC2/CDKX subfamily.

It carries out the reaction L-seryl-[protein] + ATP = O-phospho-L-seryl-[protein] + ADP + H(+). It catalyses the reaction L-threonyl-[protein] + ATP = O-phospho-L-threonyl-[protein] + ADP + H(+). The enzyme catalyses [DNA-directed RNA polymerase] + ATP = phospho-[DNA-directed RNA polymerase] + ADP + H(+). This Oryza sativa subsp. japonica (Rice) protein is Putative cyclin-dependent kinase F-2 (CDKF-2).